A 200-amino-acid polypeptide reads, in one-letter code: Ubiquitin-conjugating enzyme E2 K (200 aa).

Ala-2 is subject to N-acetylalanine. A UBC core domain is found at 4-154 (IAVQRIKREF…ARLWAHVYAG (151 aa)). Residue Lys-14 is modified to N6-acetyllysine; alternate. A Glycyl lysine isopeptide (Lys-Gly) (interchain with G-Cter in SUMO); alternate cross-link involves residue Lys-14. Lys-14 participates in a covalent cross-link: Glycyl lysine isopeptide (Lys-Gly) (interchain with G-Cter in SUMO1); alternate. The active-site Glycyl thioester intermediate is the Cys-92. A Phosphoserine modification is found at Ser-159. The UBA domain occupies 160 to 200 (PEYTKKIENLCAMGFDRNAVIVALSSKSWDVETATELLLSN).

Belongs to the ubiquitin-conjugating enzyme family. As to quaternary structure, interacts with RNF138/NARF. Interacts with BRCA1. Post-translationally, sumoylation at Lys-14 impairs catalytic activity.

Its subcellular location is the cytoplasm. The enzyme catalyses S-ubiquitinyl-[E1 ubiquitin-activating enzyme]-L-cysteine + [E2 ubiquitin-conjugating enzyme]-L-cysteine = [E1 ubiquitin-activating enzyme]-L-cysteine + S-ubiquitinyl-[E2 ubiquitin-conjugating enzyme]-L-cysteine.. It functions in the pathway protein modification; protein ubiquitination. Functionally, accepts ubiquitin from the E1 complex and catalyzes its covalent attachment to other proteins. In vitro, in the presence or in the absence of BRCA1-BARD1 E3 ubiquitin-protein ligase complex, catalyzes the synthesis of 'Lys-48'-linked polyubiquitin chains. Does not transfer ubiquitin directly to but elongates monoubiquitinated substrate protein. Mediates the selective degradation of short-lived and abnormal proteins, such as the endoplasmic reticulum-associated degradation (ERAD) of misfolded lumenal proteins. Ubiquitinates huntingtin. May mediate foam cell formation by the suppression of apoptosis of lipid-bearing macrophages through ubiquitination and subsequence degradation of p53/TP53. Proposed to be involved in ubiquitination and proteolytic processing of NF-kappa-B; in vitro supports ubiquitination of NFKB1. This chain is Ubiquitin-conjugating enzyme E2 K (UBE2K), found in Bos taurus (Bovine).